We begin with the raw amino-acid sequence, 121 residues long: Centrocin 2 (121 aa).

An N-terminal signal peptide occupies residues 1 to 20; that stretch reads MMIKIAVVLCAVMATSMVFA. Positions 21-50 are excised as a propeptide; sequence NDVKEQELADLLDLLISEEVSSPDDAVAES. Residues Trp51 and Trp59 each carry the 6'-bromotryptophan modification. A disulfide bridge connects residues Cys77 and Cys112. Residues 83 to 106 constitute a propeptide that is removed on maturation; sequence SPQEARAKVLEAFPEMKESDLDEE. Gln107 is modified (pyrrolidone carboxylic acid). His119 is modified (histidine amide).

In terms of assembly, heterodimer of a light and a heavy chain, probably disulfide-linked.

Has antimicrobial activity against Gram-negative bacteria, Gram-positive bacteria and against fungi with minimum inhibitory concentration (MIC) between 0.78 uM and 50 uM. Shows little hemolytic activity at concentrations up to 12.5 uM but &gt;50% lysis at 100 uM. The polypeptide is Centrocin 2 (Echinus esculentus (Sea urchin)).